Here is a 171-residue protein sequence, read N- to C-terminus: Transcriptional repressor NrdR (171 aa).

The segment at cysteine 3–cysteine 34 is a zinc-finger region. An ATP-cone domain is found at proline 49–glutamate 139. Residues lysine 148–serine 171 are disordered.

The protein belongs to the NrdR family. It depends on Zn(2+) as a cofactor.

Its function is as follows. Negatively regulates transcription of bacterial ribonucleotide reductase nrd genes and operons by binding to NrdR-boxes. The protein is Transcriptional repressor NrdR of Aromatoleum aromaticum (strain DSM 19018 / LMG 30748 / EbN1) (Azoarcus sp. (strain EbN1)).